Consider the following 262-residue polypeptide: Small ribosomal subunit protein eS4 (262 aa).

One can recognise an S4 RNA-binding domain in the interval 42-104 (LPLILILRNR…TNEDFRLLYD (63 aa)).

It belongs to the eukaryotic ribosomal protein eS4 family.

It is found in the cytoplasm. This Gossypium hirsutum (Upland cotton) protein is Small ribosomal subunit protein eS4 (RPS4).